The chain runs to 487 residues: Lysophospholipid acyltransferase 5 (487 aa).

Position 2 is an N-acetylalanine (Ala-2). Transmembrane regions (helical) follow at residues 44-64 (LIFSIFLGYPLALFYRHYLFY), 84-104 (FNFGHQFYHSLLCVVLQFLIL), 111-131 (VTAVITTLCFQMAYLLAGYYY), and 180-200 (GVPSLLEVAGFSYFYGAFLVG). N-linked (GlcNAc...) asparagine glycosylation occurs at Asn-225. 2 consecutive transmembrane segments (helical) span residues 236-256 (LGLVYLVGYTLLSPHITDDYL) and 285-305 (VTCWLVTEGVCILSGLGFNGF). Asn-308 and Asn-331 each carry an N-linked (GlcNAc...) asparagine glycan. Active-site residues include Asn-338 and His-374. A run of 3 helical transmembrane segments spans residues 364 to 384 (GLSLLFLALWHGLHSGYLICF), 422 to 442 (LVQQTIHWLFMGYSMTAFCLF), and 453 to 473 (SIYFLGHVFFLSLLFILPYIH). Residues 484–487 (KKRE) carry the Di-lysine motif motif.

This sequence belongs to the membrane-bound acyltransferase family. Detected ubiquitously, with high expression levels in small intestine, brown adipose tissue, liver, kidney and testis. Expressed in liver and both proximal and distal small intestine (at protein level). Expressed in peritoneal macrophages.

The protein resides in the endoplasmic reticulum membrane. The catalysed reaction is a 1-acyl-sn-glycero-3-phosphocholine + an acyl-CoA = a 1,2-diacyl-sn-glycero-3-phosphocholine + CoA. The enzyme catalyses a 1-acyl-sn-glycero-3-phosphoethanolamine + an acyl-CoA = a 1,2-diacyl-sn-glycero-3-phosphoethanolamine + CoA. It catalyses the reaction a 1-acyl-sn-glycero-3-phospho-L-serine + an acyl-CoA = a 1,2-diacyl-sn-glycero-3-phospho-L-serine + CoA. It carries out the reaction (9Z,12Z)-octadecadienoyl-CoA + a 1-acyl-sn-glycero-3-phosphocholine = 1-acyl-2-(9Z,12Z)-octadecadienoyl-sn-glycero-3-phosphocholine + CoA. The catalysed reaction is (5Z,8Z,11Z,14Z)-eicosatetraenoyl-CoA + a 1-acyl-sn-glycero-3-phosphocholine = 1-acyl-2-(5Z,8Z,11Z,14Z-eicosatetraenoyl)-sn-glycero-3-phosphocholine + CoA. The enzyme catalyses dodecanoyl-CoA + 1-hexadecanoyl-sn-glycero-3-phosphocholine = 1-hexadecanoyl-2-dodecanoyl-sn-glycero-3-phosphocholine + CoA. It catalyses the reaction octadecanoyl-CoA + 1-hexadecanoyl-sn-glycero-3-phosphocholine = 1-hexadecanoyl-2-octadecanoyl-sn-glycero-3-phosphocholine + CoA. It carries out the reaction 1-dodecanoyl-sn-glycero-3-phosphocholine + hexadecanoyl-CoA = 1-dodecanoyl-2-hexadecanoyl-sn-glycero-3-phosphocholine + CoA. The catalysed reaction is 1-tetradecanoyl-sn-glycero-3-phosphocholine + hexadecanoyl-CoA = 1-tetradecanoyl-2-hexadecanoyl-sn-glycero-3-phosphocholine + CoA. The enzyme catalyses 1-hexadecanoyl-sn-glycero-3-phosphocholine + hexadecanoyl-CoA = 1,2-dihexadecanoyl-sn-glycero-3-phosphocholine + CoA. It catalyses the reaction 1-octadecanoyl-sn-glycero-3-phosphocholine + hexadecanoyl-CoA = 1-octadecanoyl-2-hexadecanoyl-sn-glycero-3-phosphocholine + CoA. It carries out the reaction 1-(9Z-octadecenoyl)-sn-glycero-3-phosphocholine + hexadecanoyl-CoA = 1-(9Z-octadecenoyl)-2-hexadecanoyl-sn-glycero-3-phosphocholine + CoA. The catalysed reaction is (9Z)-hexadecenoyl-CoA + 1-hexadecanoyl-sn-glycero-3-phosphocholine = 1-hexadecanoyl-2-(9Z-hexadecenoyl)-sn-glycero-3-phosphocholine + CoA. The enzyme catalyses 1-hexadecanoyl-sn-glycero-3-phosphocholine + (9Z)-octadecenoyl-CoA = 1-hexadecanoyl-2-(9Z-octadecenoyl)-sn-glycero-3-phosphocholine + CoA. It catalyses the reaction (9Z,12Z)-octadecadienoyl-CoA + 1-hexadecanoyl-sn-glycero-3-phosphocholine = 1-hexadecanoyl-2-(9Z,12Z-octadecadienoyl)-sn-glycero-3-phosphocholine + CoA. It carries out the reaction 1-dodecanoyl-sn-glycero-3-phosphocholine + (5Z,8Z,11Z,14Z)-eicosatetraenoyl-CoA = 1-dodecanoyl-2-(5Z,8Z,11Z,14Z)-eicosatetraenoyl-sn-glycero-3-phosphocholine + CoA. The catalysed reaction is (5Z,8Z,11Z,14Z)-eicosatetraenoyl-CoA + 1-hexadecanoyl-sn-glycero-3-phosphocholine = 1-hexadecanoyl-2-(5Z,8Z,11Z,14Z-eicosatetraenoyl)-sn-glycero-3-phosphocholine + CoA. The enzyme catalyses 1-octadecanoyl-sn-glycero-3-phosphocholine + (5Z,8Z,11Z,14Z)-eicosatetraenoyl-CoA = 1-octadecanoyl-2-(5Z,8Z,11Z,14Z-eicosatetraenoyl)-sn-glycero-3-phosphocholine + CoA. It catalyses the reaction 1-eicosanoyl-sn-glycero-3-phosphocholine + (5Z,8Z,11Z,14Z)-eicosatetraenoyl-CoA = 1-eicosanoyl-2-(5Z,8Z,11Z,14Z)-eicosatetraenoyl-sn-glycero-3-phosphocholine + CoA. It carries out the reaction 1-(9Z-octadecenoyl)-sn-glycero-3-phosphocholine + (9Z)-octadecenoyl-CoA = 1,2-di-(9Z-octadecenoyl)-sn-glycero-3-phosphocholine + CoA. The catalysed reaction is 1-(9Z-octadecenoyl)-sn-glycero-3-phosphocholine + (9Z,12Z)-octadecadienoyl-CoA = 1-(9Z)-octadecenoyl-2-(9Z,12Z)-octadecadienoyl-sn-glycero-3-phosphocholine + CoA. The enzyme catalyses 1-(9Z-octadecenoyl)-sn-glycero-3-phosphocholine + (5Z,8Z,11Z,14Z)-eicosatetraenoyl-CoA = 1-(9Z)-octadecenoyl-2-(5Z,8Z,11Z,14Z)-icosatetraenoyl-sn-glycero-3-phosphocholine + CoA. It catalyses the reaction a 1-acyl-sn-glycero-3-phosphoethanolamine + (9Z,12Z)-octadecadienoyl-CoA = 1-acyl-2-(9Z,12Z)-octadecadienoyl-sn-glycero-3-phosphoethanolamine + CoA. It carries out the reaction 1-(9Z-octadecenoyl)-sn-glycero-3-phosphoethanolamine + (9Z,12Z)-octadecadienoyl-CoA = 1-(9Z)-octadecenoyl-2-(9Z,12Z)-octadecadienoyl-sn-glycero-3-phosphoethanolamine + CoA. The catalysed reaction is 1-(10Z-heptadecenoyl)-sn-glycero-3-phosphoethanolamine + (9Z,12Z)-octadecadienoyl-CoA = 1-(10Z-heptadecenoyl)-2-(9Z,12Z-octadecadienoyl)-sn-glycero-3-phosphoethanolamine + CoA. The enzyme catalyses a 1-acyl-sn-glycero-3-phosphoethanolamine + (5Z,8Z,11Z,14Z)-eicosatetraenoyl-CoA = 1-acyl-2-(5Z,8Z,11Z,14Z)-eicosatetraenoyl-sn-glycero-3-phosphoethanolamine + CoA. It catalyses the reaction 1-hexadecanoyl-sn-glycero-3-phosphoethanolamine + (5Z,8Z,11Z,14Z)-eicosatetraenoyl-CoA = 1-hexadecanoyl-2-(5Z,8Z,11Z,14Z-eicosatetraenoyl)-sn-glycero-3-phosphoethanolamine + CoA. It carries out the reaction 1-(9Z-octadecenoyl)-sn-glycero-3-phosphoethanolamine + (5Z,8Z,11Z,14Z)-eicosatetraenoyl-CoA = 1-(9Z)-octadecenoyl-2-(5Z,8Z,11Z,14Z)-eicosatetraenoyl-sn-glycero-3-phosphoethanolamine + CoA. The catalysed reaction is 1-(10Z-heptadecenoyl)-sn-glycero-3-phosphoethanolamine + (5Z,8Z,11Z,14Z)-eicosatetraenoyl-CoA = 1-(10Z-heptadecenoyl)-2-(5Z,8Z,11Z,14Z-eicosatetraenoyl)-sn-glycero-3-phosphoethanolamine + CoA. The enzyme catalyses a 1-O-(1Z-alkenyl)-sn-glycero-3-phosphoethanolamine + (5Z,8Z,11Z,14Z)-eicosatetraenoyl-CoA = 1-O-(1Z)-alkenyl-2-(5Z,8Z,11Z,14Z)-eicosatetraenoyl-sn-glycero-3-phosphoethanolamine + CoA. It catalyses the reaction a 1-acyl-sn-glycero-3-phospho-L-serine + (9Z,12Z)-octadecadienoyl-CoA = 1-acyl-2-(9Z,12Z-octadecadienoyl)-sn-glycero-3-phospho-L-serine + CoA. It carries out the reaction a 1-acyl-sn-glycero-3-phospho-L-serine + (5Z,8Z,11Z,14Z)-eicosatetraenoyl-CoA = 1-acyl-2-(5Z,8Z,11Z,14Z-eicosatetraenoyl)-sn-glycero-3-phospho-L-serine + CoA. The catalysed reaction is 1-hexadecanoyl-sn-glycero-3-phospho-L-serine + (9Z)-octadecenoyl-CoA = 1-hexadecanoyl-2-(9Z-octadecenoyl)-sn-glycero-3-phospho-L-serine + CoA. The enzyme catalyses 1-(9Z-octadecenoyl)-sn-glycero-3-phospho-L-serine + (9Z)-octadecenoyl-CoA = 1,2-di-(9Z)-octadecenoyl-sn-glycero-3-phospho-L-serine + CoA. It catalyses the reaction 1-hexadecanoyl-sn-glycero-3-phospho-L-serine + (9Z,12Z)-octadecadienoyl-CoA = 1-hexadecanoyl-2-(9Z,12Z-octadecadienoyl)-sn-glycero-3-phospho-L-serine + CoA. It carries out the reaction 1-(9Z-octadecenoyl)-sn-glycero-3-phospho-L-serine + (9Z,12Z)-octadecadienoyl-CoA = 1-(9Z-octadecenoyl)-2-(9Z,12Z-octadienoyl)-sn-glycero-3-phospho-L-serine + CoA. The catalysed reaction is 1-hexadecanoyl-sn-glycero-3-phospho-L-serine + (5Z,8Z,11Z,14Z)-eicosatetraenoyl-CoA = 1-hexadecanoyl-2-(5Z,8Z,11Z,14Z-eicosatetraenoyl)-sn-glycero-3-phospho-L-serine + CoA. The enzyme catalyses 1-(9Z-octadecenoyl)-sn-glycero-3-phospho-L-serine + (5Z,8Z,11Z,14Z)-eicosatetraenoyl-CoA = 1-(9Z-octadecenoyl)-2-(5Z,8Z,11Z,14Z-eicosatetraenoyl)-sn-glycero-3-phospho-L-serine + CoA. The protein operates within lipid metabolism; phospholipid metabolism. In terms of biological role, lysophospholipid O-acyltransferase (LPLAT) that catalyzes the reacylation step of the phospholipid remodeling process also known as the Lands cycle. Catalyzes transfer of the fatty acyl chain from fatty acyl-CoA to 1-acyl lysophospholipid to form various classes of phospholipids. Converts 1-acyl lysophosphatidylcholine (LPC) into phosphatidylcholine (PC) (LPCAT activity), 1-acyl lysophosphatidylserine (LPS) into phosphatidylserine (PS) (LPSAT activity) and 1-acyl lysophosphatidylethanolamine (LPE) into phosphatidylethanolamine (PE) (LPEAT activity). Favors polyunsaturated fatty acyl-CoAs as acyl donors compared to saturated fatty acyl-CoAs. Has higher activity for LPC acyl acceptors compared to LPEs and LPSs. Can also transfer the fatty acyl chain from fatty acyl-CoA to 1-O-alkyl lysophospholipid or 1-O-alkenyl lysophospholipid with lower efficiency. Acts as a major LPC O-acyltransferase in liver and intestine. As a component of the liver X receptor/NR1H3 or NR1H2 signaling pathway, mainly catalyzes the incorporation of arachidonate into PCs of endoplasmic reticulum (ER) membranes, increasing membrane dynamics and enabling triacylglycerols transfer to nascent very low-density lipoprotein (VLDL) particles. Promotes processing of sterol regulatory protein SREBF1 in hepatocytes, likely by facilitating the translocation of SREBF1-SCAP complex from ER to the Golgi apparatus. Participates in mechanisms by which the liver X receptor/NR1H3 or NR1H2 signaling pathway counteracts lipid-induced ER stress response and inflammation. Down-regulates hepatic inflammation by limiting arachidonic acid availability for synthesis of inflammatory eicosanoids, such as prostaglandins. In enterocytes, acts as a component of a gut-brain feedback loop that coordinates dietary lipid absorption and food intake. Regulates the abundance of PCs containing linoleate and arachidonate in enterocyte membranes, enabling passive diffusion of fatty acids and cholesterol across the membrane for efficient chylomicron assembly. In the intestinal crypt, acts as a component of dietary-responsive phospholipid-cholesterol axis, regulating the biosynthesis of cholesterol and its mitogenic effects on intestinal stem cells. In Mus musculus (Mouse), this protein is Lysophospholipid acyltransferase 5 (Lpcat3).